The sequence spans 220 residues: MVYKLVLLFCIASLGYSVEYKNTICPPRQDYRYWYFAAELTIGVNYDINSTIIGECHMSESYIDRNANIVLTGYGLEINMTIMDTDQRFVAAAEGVGKDNKLSVLLFTTQRLDKVHHNISVTITCMEMNCGTTKYDSDLPESIHKSSSCDITINGSCVTCVNLETDPTKINPHYLHPKDKYLYHNSEYGMRGSYGVTFIDELNQCLLDIKELSYDICYRE.

A signal peptide spans M1 to S17.

It belongs to the orthopoxvirus OPG038 family. In terms of assembly, homooligomer. Interacts with host CD80 and CD86 when secreted. Post-translationally, glycosylated by host.

Its subcellular location is the host endoplasmic reticulum. The protein localises to the secreted. Its function is as follows. Plays a role in immune evasion. When secreted, inhibits T-cell activation by preventing the binding of host CD80 and CD86 to soluble CTLA4 and CD28. In the infected cell, may inhibits host NF kappa B activation. The protein is Early protein OPG038 (OPG038) of Homo sapiens (Human).